A 188-amino-acid polypeptide reads, in one-letter code: Mitochondrial import receptor subunit TOM20 homolog (188 aa).

The Mitochondrial intermembrane segment spans residues 1 to 12 (MTDTLFGFNKSN). A helical transmembrane segment spans residues 13–31 (VVLAAGVAGAAFLGYCIYF). Topologically, residues 32–188 (DHKRINAPDY…ELIDDTDDLE (157 aa)) are cytoplasmic. Disordered regions lie at residues 48–67 (KRRA…PAGG) and 155–188 (ADEA…DDLE). Positions 58–67 (MAARRPPAGG) are enriched in low complexity.

This sequence belongs to the Tom20 family. In terms of assembly, forms part of the preprotein translocase complex of the outer mitochondrial membrane (TOM complex).

It localises to the mitochondrion outer membrane. In terms of biological role, central component of the receptor complex responsible for the recognition and translocation of cytosolically synthesized mitochondrial preproteins. Together with TOM22 functions as the transit peptide receptor at the surface of the mitochondrion outer membrane and facilitates the movement of preproteins into the translocation pore. In Caenorhabditis briggsae, this protein is Mitochondrial import receptor subunit TOM20 homolog (tomm-20).